We begin with the raw amino-acid sequence, 206 residues long: Putative 3-methyladenine DNA glycosylase (206 aa).

It belongs to the DNA glycosylase MPG family.

This Rhodopseudomonas palustris (strain ATCC BAA-98 / CGA009) protein is Putative 3-methyladenine DNA glycosylase.